Reading from the N-terminus, the 85-residue chain is HssA/B-like protein 59 (85 aa).

Belongs to the hssA/B family.

This chain is HssA/B-like protein 59 (hssl59), found in Dictyostelium discoideum (Social amoeba).